The following is a 116-amino-acid chain: Mercuric transport protein MerT (116 aa).

The next 2 membrane-spanning stretches (helical) occupy residues 16-36 and 46-66; these read LAAILASACCLGPLVLIALGF and VLEPYRPIFIGAALVALFFAW. Hg(2+)-binding residues include cysteine 24 and cysteine 25. Cysteine 76 and cysteine 82 together coordinate Hg(2+). A helical membrane pass occupies residues 94–114; the sequence is IFWVVAALVLVALGFPYVMPF.

Belongs to the MerT family.

Its subcellular location is the cell inner membrane. Functionally, involved in mercury resistance. Probably transfers a mercuric ion from the periplasmic Hg(2+)-binding protein MerP to the cytoplasmic mercuric reductase MerA. The protein is Mercuric transport protein MerT of Serratia marcescens.